We begin with the raw amino-acid sequence, 141 residues long: Protein C19orf12 (141 aa).

The helical transmembrane segment at 40 to 60 threads the bilayer; that stretch reads FVGGLVGGPPGLAVGGAVGGL.

This sequence belongs to the C19orf12 family.

Its subcellular location is the mitochondrion. The protein localises to the mitochondrion membrane. The protein resides in the endoplasmic reticulum. It localises to the cytoplasm. It is found in the cytosol. This is Protein C19orf12 (C19orf12) from Homo sapiens (Human).